A 353-amino-acid chain; its full sequence is Spermidine/putrescine import ATP-binding protein PotA (353 aa).

One can recognise an ABC transporter domain in the interval 7 to 237; the sequence is IRFERVTKEY…PINRFVADFI (231 aa). 39-46 is an ATP binding site; that stretch reads GPSGCGKT.

This sequence belongs to the ABC transporter superfamily. Spermidine/putrescine importer (TC 3.A.1.11.1) family. In terms of assembly, the complex is composed of two ATP-binding proteins (PotA), two transmembrane proteins (PotB and PotC) and a solute-binding protein (PotD).

The protein resides in the cell membrane. It carries out the reaction ATP + H2O + polyamine-[polyamine-binding protein]Side 1 = ADP + phosphate + polyamineSide 2 + [polyamine-binding protein]Side 1.. Part of the ABC transporter complex PotABCD involved in spermidine/putrescine import. Responsible for energy coupling to the transport system. In Geobacillus kaustophilus (strain HTA426), this protein is Spermidine/putrescine import ATP-binding protein PotA.